A 623-amino-acid chain; its full sequence is Methionine--tRNA ligase (623 aa).

Positions 11–21 (PYANGPRHIGH) match the 'HIGH' region motif. Zn(2+)-binding residues include C143, C146, C156, and C159. The 'KMSKS' region motif lies at 347–351 (KFSSS). S350 is a binding site for ATP.

The protein belongs to the class-I aminoacyl-tRNA synthetase family. MetG type 1 subfamily. Monomer. It depends on Zn(2+) as a cofactor.

It localises to the cytoplasm. The enzyme catalyses tRNA(Met) + L-methionine + ATP = L-methionyl-tRNA(Met) + AMP + diphosphate. Functionally, is required not only for elongation of protein synthesis but also for the initiation of all mRNA translation through initiator tRNA(fMet) aminoacylation. The protein is Methionine--tRNA ligase of Bifidobacterium animalis subsp. lactis (strain AD011).